A 333-amino-acid chain; its full sequence is Minor fimbrium tip subunit MfA4 (333 aa).

The N-terminal stretch at 1–18 (MKKYLLYASLLTSVLLFS) is a signal peptide. Cys19 carries the N-palmitoyl cysteine lipid modification. Cys19 is lipidated: S-diacylglycerol cysteine. Positions 19-53 (CSKNNPSEPVEDRSIEISIRVDDFTKTGETVRYER) are excised as a propeptide.

This sequence belongs to the bacteroidetes fimbrillin superfamily. FimA/Mfa1 family. Component of the fimbrium tip. Minor fimbriae are composed of a structural subunit, most often Mfa1, and the accessory subunits Mfa3, Mfa4 and Mfa5. Mfa4 is required for Mfa3 and Mfa5 insertion into the fimbrium. Fimbrium assembly occurs by linear, head-to-tail oligomerization of fimbrial subunits. This is mediated via insertion of a C-terminal beta-strand from one subunit into a groove in the N-terminal domain of the following subunit.

Its subcellular location is the fimbrium. It localises to the cell outer membrane. In terms of biological role, tip subunit of the minor fimbriae. These filamentous pili are attached to the cell surface; they mediate biofilm formation, adhesion onto host cells and onto other bacteria that are part of the oral microbiome. They play an important role in invasion of periodontal tissues and are recognized as major virulence factors. This Porphyromonas gingivalis (strain ATCC 33277 / DSM 20709 / CIP 103683 / JCM 12257 / NCTC 11834 / 2561) protein is Minor fimbrium tip subunit MfA4.